Reading from the N-terminus, the 713-residue chain is MEGTPNVPQAHRYELTLAGRPLVLETGKYAKQASGSVLVRYADTVVLATAQASETPVEADFLPLTVEFEERHYAVGKIPGSFMRREGRPGEKAILSARMTDRPIRPLFPKGFRHEVQIIVTVLSADQKNPPDILGPIAASAALMLSDIPWEGPIAAVRVGLIGGSFVLNPTLQELEESQLDLVVAGSKEAILMVEAEAGEVDEETLVQALEFAHKEMQPILELQEAMARELAKPKMAWTPPESLPEEEKEALYRLALERGLSQVLQTASKGERSRALAEFAERLIAEALPKGEDGTPDEGKKPLYESAFDEVVRRELRRLVLEEGKRADGRGPKDLRPIWIEVDVLPRAHGSAVFTRGETQVLGTVTLGTGRDEQILDDLGIDETEKFLVHYNFPPFSTGEVRRLRGVSRREVGHGNLAKRALKAVMPKEEDFPYTIRVVGDVLESNGSSSMATVCAGCLALMDAGVPIRAPVAGVAMGLVWEENRAVILTDILGLEDALGDMDFKVAGTRKGVTALQMDNKVGGLPREVLKEALLQAREARLKILDLMEAVLPAPRPELKPFAPRILSLKVPVEKIGLVIGPGGKNVRALEELGVEVDIEEDGTVRIYSSDLQAALEAKKRIEDLTREAKVGEIYEGTVTRITPFGAFISLFPGTEGLLHISQIAPGRVARVEDHLKVGDVIKVKVHRIDERGKIDLIRPELEGKIPPRRRR.

Mg(2+) contacts are provided by aspartate 498 and aspartate 504. Residues 565–631 enclose the KH domain; the sequence is PRILSLKVPV…RIEDLTREAK (67 aa). An S1 motif domain is found at 633–701; it reads GEIYEGTVTR…ERGKIDLIRP (69 aa).

It belongs to the polyribonucleotide nucleotidyltransferase family. The cofactor is Mg(2+).

It is found in the cytoplasm. The catalysed reaction is RNA(n+1) + phosphate = RNA(n) + a ribonucleoside 5'-diphosphate. In terms of biological role, involved in mRNA degradation. Catalyzes the phosphorolysis of single-stranded polyribonucleotides processively in the 3'- to 5'-direction. This is Polyribonucleotide nucleotidyltransferase from Thermus thermophilus (strain ATCC 27634 / DSM 579 / HB8).